The sequence spans 257 residues: MALAKRIIPCLDVTAGRVVKGVNFVELRDAGDPVEIARRYDDQGADELTFLDITATSDQRDLILPIIEAVASQVFIPLTVGGGVRAVEDVRRLLNAGADKVSMNSSAVANPQLVRDAADKYGSQCIVVAIDAKRVSADGETPRWEVFTHGGRKNTGLDAIEWARKMAELGAGEILLTSMDRDGTKSGFDLALTRGVSDAVPVPVIASGGVGSLQHLADGIKDGRADAVLAASIFHYGEHTVGEAKRFMADQGIPVRL.

Residues Asp-12 and Asp-131 contribute to the active site.

The protein belongs to the HisA/HisF family. In terms of assembly, heterodimer of HisH and HisF.

It is found in the cytoplasm. It carries out the reaction 5-[(5-phospho-1-deoxy-D-ribulos-1-ylimino)methylamino]-1-(5-phospho-beta-D-ribosyl)imidazole-4-carboxamide + L-glutamine = D-erythro-1-(imidazol-4-yl)glycerol 3-phosphate + 5-amino-1-(5-phospho-beta-D-ribosyl)imidazole-4-carboxamide + L-glutamate + H(+). It functions in the pathway amino-acid biosynthesis; L-histidine biosynthesis; L-histidine from 5-phospho-alpha-D-ribose 1-diphosphate: step 5/9. In terms of biological role, IGPS catalyzes the conversion of PRFAR and glutamine to IGP, AICAR and glutamate. The HisF subunit catalyzes the cyclization activity that produces IGP and AICAR from PRFAR using the ammonia provided by the HisH subunit. This is Imidazole glycerol phosphate synthase subunit HisF from Burkholderia lata (strain ATCC 17760 / DSM 23089 / LMG 22485 / NCIMB 9086 / R18194 / 383).